A 445-amino-acid chain; its full sequence is Baccatin III:3-amino-3-phenylpropanoyltransferase (445 aa).

This sequence belongs to the plant acyltransferase family.

It catalyses the reaction (3R)-3-amino-3-phenylpropanoyl-CoA + baccatin III = 3'-N-debenzoyl-2'-deoxytaxol + CoA. It participates in alkaloid biosynthesis; taxol biosynthesis. Its function is as follows. Acyltransferase involved in taxol biosynthesis. Catalyzes the selective 13-O-acylation of baccatin III with (3R)-3-amino-3-phenylpropanoyl-CoA as the acyl donor to form 3'-N-debenzoyl-2'-deoxytaxol. The protein is Baccatin III:3-amino-3-phenylpropanoyltransferase of Taxus cuspidata (Japanese yew).